We begin with the raw amino-acid sequence, 245 residues long: Protein-L-isoaspartate O-methyltransferase 1 (245 aa).

Residue S76 is part of the active site.

This sequence belongs to the methyltransferase superfamily. L-isoaspartyl/D-aspartyl protein methyltransferase family.

The protein localises to the cytoplasm. It catalyses the reaction [protein]-L-isoaspartate + S-adenosyl-L-methionine = [protein]-L-isoaspartate alpha-methyl ester + S-adenosyl-L-homocysteine. Catalyzes the methyl esterification of L-isoaspartyl residues in peptides and proteins that result from spontaneous decomposition of normal L-aspartyl and L-asparaginyl residues. It plays a role in the repair and/or degradation of damaged proteins. This is Protein-L-isoaspartate O-methyltransferase 1 from Rhodopseudomonas palustris (strain HaA2).